A 148-amino-acid chain; its full sequence is MTLFIDGDAFPNLLKPIVLRSIERLALPTKVIANKKINIGRSSHIEYIIVDQGADEADHRIVDLCQKDDLVITADIPLADRIISKEGHAIDHRGELYSIENIKQYLAMRNLMESIRESGEMTGGPKAFGPKDAHAFANQFNAFLAKNC.

This sequence belongs to the UPF0178 family.

This is UPF0178 protein SUN_1096 from Sulfurovum sp. (strain NBC37-1).